The chain runs to 397 residues: Calponin-like protein clik-2 (397 aa).

6 Calponin-like repeats span residues 29-54 (LSQQ…RWNI), 73-98 (LRVQ…RFQV), 119-144 (IPKQ…RNQV), 161-189 (LCFQ…RQAT), 209-234 (TPWY…RDVL), and 255-280 (VPLQ…RNTQ). The disordered stretch occupies residues 301–397 (EETKPPGSAS…EEEEEEEEDE (97 aa)). Over residues 321–332 (KFEERESSRQSE) the composition is skewed to basic and acidic residues. 2 stretches are compositionally biased toward acidic residues: residues 344 to 360 (VEPE…EEKI) and 367 to 397 (EEEE…EEDE).

It belongs to the calponin family. As to expression, expressed in pharyngeal muscle cells (at protein level).

Its function is as follows. Required for pharyngeal pumping. This is Calponin-like protein clik-2 from Caenorhabditis elegans.